Consider the following 321-residue polypeptide: Fibronectin type III domain-containing protein 8 (321 aa).

The 103-residue stretch at valine 175–threonine 277 folds into the Fibronectin type-III domain.

The polypeptide is Fibronectin type III domain-containing protein 8 (Fndc8) (Mus musculus (Mouse)).